Here is a 179-residue protein sequence, read N- to C-terminus: ATP-dependent protease subunit HslV (179 aa).

T7 is a catalytic residue. Na(+)-binding residues include G162, C165, and T168.

Belongs to the peptidase T1B family. HslV subfamily. As to quaternary structure, a double ring-shaped homohexamer of HslV is capped on each side by a ring-shaped HslU homohexamer. The assembly of the HslU/HslV complex is dependent on binding of ATP.

It localises to the cytoplasm. The catalysed reaction is ATP-dependent cleavage of peptide bonds with broad specificity.. Allosterically activated by HslU binding. In terms of biological role, protease subunit of a proteasome-like degradation complex believed to be a general protein degrading machinery. In Aromatoleum aromaticum (strain DSM 19018 / LMG 30748 / EbN1) (Azoarcus sp. (strain EbN1)), this protein is ATP-dependent protease subunit HslV.